A 259-amino-acid polypeptide reads, in one-letter code: MAARRALKAVLVDLNGTLHIEDAAVPGAQEALKRLRATSVMVRFVTNTTKESKKDLLERLKKLEFEISEDEIFTSLTAARNLIEQKQVRPMLLVDDRALPEFTGVQTQDPNAVVIGLAPEHFHYQLLNQAFRLLLDGAPLIAIHKARYYKRKDGLALGPGPFVTALEYATDTKAMVVGKPEKTFFLEALRDADCAPEEAVMIGDDCRDDVDGAQNIGMLGILVKTGKYKAADEEKINPPPYLTCESFPHAVDHILQHLL.

The Mg(2+) site is built by Asp-13 and Asn-15. Residues 13–15 (DLN) and 46–47 (TN) each bind substrate. Residues 47-72 (NTTKESKKDLLERLKKLEFEISEDEI) are a coiled coil. Position 50 is an N6-succinyllysine (Lys-50). Lys-179 is a substrate binding site. Asp-204 serves as a coordination point for Mg(2+).

It belongs to the HAD-like hydrolase superfamily. It depends on Mg(2+) as a cofactor.

This Mus musculus (Mouse) protein is Haloacid dehalogenase-like hydrolase domain-containing protein 2 (Hdhd2).